We begin with the raw amino-acid sequence, 450 residues long: MREIISIHIGQAGIQVGNSCWELYCLEHGIQPDGMMPSDTTVGVAHDAFNTFFSETGAGKHVPRAVFVDLEPTVIDEVRTGTYRQLFHPEQLISGKEDAANNFARGHYTVGKEIVDLCLDRVRKLADNCTGLQGFLVFNAVGGGTGSGLGSLLLERLSVDYGKKSKLGFTIYPSPQVSTAVVEPYNSVLSTHSLLEHTDVAVLLDNEAIYDICRRSLDIERPTYTNLNRLISQIISSLTTSLRFDGAINVDITEFQTNLVPYPRIHFMLSSYAPVISAAKAYHEQLSVPEITNAVFEPASMMAKCDPRHGKYMACCLMYRGDVVPKDVNAAVGTIKTKRTVQFVDWCPTGFKCGINYQPPTVVPGGDLAKVQRAVCMISNNTAVAEVFSRIDHKFDLMYAKRAFVHWYVGEGMEEGEFSEAREDLAALEKDYEEVGAEGGDDEEDEGEDY.

GTP is bound by residues Gln11, Glu71, Gly144, Thr145, Thr179, Asn206, and Asn228. Residue Glu71 coordinates Mg(2+). Glu254 is a catalytic residue. Phosphothreonine is present on Thr349. Residues 429 to 450 (EKDYEEVGAEGGDDEEDEGEDY) are disordered. Positions 431–450 (DYEEVGAEGGDDEEDEGEDY) are enriched in acidic residues.

It belongs to the tubulin family. In terms of assembly, dimer of alpha and beta chains. A typical microtubule is a hollow water-filled tube with an outer diameter of 25 nm and an inner diameter of 15 nM. Alpha-beta heterodimers associate head-to-tail to form protofilaments running lengthwise along the microtubule wall with the beta-tubulin subunit facing the microtubule plus end conferring a structural polarity. Microtubules usually have 13 protofilaments but different protofilament numbers can be found in some organisms and specialized cells. Mg(2+) is required as a cofactor. Undergoes a tyrosination/detyrosination cycle, the cyclic removal and re-addition of a C-terminal tyrosine residue by the enzymes tubulin tyrosine carboxypeptidase (TTCP) and tubulin tyrosine ligase (TTL), respectively.

The protein resides in the cytoplasm. The protein localises to the cytoskeleton. It catalyses the reaction GTP + H2O = GDP + phosphate + H(+). Functionally, tubulin is the major constituent of microtubules, a cylinder consisting of laterally associated linear protofilaments composed of alpha- and beta-tubulin heterodimers. Microtubules grow by the addition of GTP-tubulin dimers to the microtubule end, where a stabilizing cap forms. Below the cap, tubulin dimers are in GDP-bound state, owing to GTPase activity of alpha-tubulin. The sequence is that of Tubulin alpha-5 chain (TUBA5) from Arabidopsis thaliana (Mouse-ear cress).